Consider the following 550-residue polypeptide: Methionine--tRNA ligase (550 aa).

A 'HIGH' region motif is present at residues 13 to 23; it reads PYANGEIHLGH. Cys-144, Cys-147, Cys-157, and Cys-160 together coordinate Zn(2+). Residues 329–333 carry the 'KMSKS' region motif; the sequence is KMSKS. Lys-332 contacts ATP.

It belongs to the class-I aminoacyl-tRNA synthetase family. MetG type 1 subfamily. As to quaternary structure, monomer. Zn(2+) serves as cofactor.

The protein resides in the cytoplasm. It carries out the reaction tRNA(Met) + L-methionine + ATP = L-methionyl-tRNA(Met) + AMP + diphosphate. Functionally, is required not only for elongation of protein synthesis but also for the initiation of all mRNA translation through initiator tRNA(fMet) aminoacylation. In Ruthia magnifica subsp. Calyptogena magnifica, this protein is Methionine--tRNA ligase.